The following is a 952-amino-acid chain: Isoleucine--tRNA ligase (952 aa).

The short motif at 58-68 (PYANGDIHIGH) is the 'HIGH' region element. Glu-576 contacts L-isoleucyl-5'-AMP. Residues 617–621 (KMSKS) carry the 'KMSKS' region motif. An ATP-binding site is contributed by Lys-620. Zn(2+) contacts are provided by Cys-915, Cys-918, Cys-935, and Cys-938.

The protein belongs to the class-I aminoacyl-tRNA synthetase family. IleS type 1 subfamily. In terms of assembly, monomer. Zn(2+) serves as cofactor.

It is found in the cytoplasm. It catalyses the reaction tRNA(Ile) + L-isoleucine + ATP = L-isoleucyl-tRNA(Ile) + AMP + diphosphate. Catalyzes the attachment of isoleucine to tRNA(Ile). As IleRS can inadvertently accommodate and process structurally similar amino acids such as valine, to avoid such errors it has two additional distinct tRNA(Ile)-dependent editing activities. One activity is designated as 'pretransfer' editing and involves the hydrolysis of activated Val-AMP. The other activity is designated 'posttransfer' editing and involves deacylation of mischarged Val-tRNA(Ile). The sequence is that of Isoleucine--tRNA ligase from Aliivibrio fischeri (strain ATCC 700601 / ES114) (Vibrio fischeri).